A 532-amino-acid chain; its full sequence is Carboxypeptidase Y (532 aa).

The N-terminal stretch at 1-20 (MKAFTSLLCGLGLSTTLAKA) is a signal peptide. Positions 21 to 111 (ISLQRPLGLD…AIENYQLRVN (91 aa)) are cleaved as a propeptide — mediates translocation across the endoplasmic reticulum, renders the enzyme inactive during transit, and targets the molecule to the vacuole. Residues 24–27 (QRPL) carry the Vacuolar targeting signal motif. Residues Asn124 and Asn198 are each glycosylated (N-linked (GlcNAc...) (high mannose) asparagine). Intrachain disulfides connect Cys167-Cys409, Cys304-Cys318, Cys328-Cys351, Cys335-Cys344, and Cys373-Cys379. Residue Ser257 is part of the active site. Asn279 is a glycosylation site (N-linked (GlcNAc...) (high mannose) asparagine). Asp449 is a catalytic residue. A substrate-binding site is contributed by Cys452. N-linked (GlcNAc...) (high mannose) asparagine glycosylation occurs at Asn479. His508 is a catalytic residue. Met509 is a binding site for substrate.

The protein belongs to the peptidase S10 family. In terms of processing, enters the endoplasmic reticulum as an inactive zymogen and is modified by four N-linked core oligosaccharides, giving rise to a precursor known as P1 (67 kDa). As P1 transits through the Golgi, extension of its core oligosaccharides leads to the Golgi-modified P2 precursor (69 kDa). P2 is sorted away from secretory proteins at or beyond a late Golgi compartment and is subsequently delivered to the vacuole via a prevacuolar endosome-like compartment. Upon arrival in the vacuole, the N-terminal prosegment of P2 is cleaved by vacuolar proteases to yield the enzymatically active mature vacuolar form of CPY (61 kDa). Post-translationally, the four high mannose core N-glycans found in mature CPY are Man(11-15)GlcNAc(2) at Asn-124, Man(8-12)GlcNAc(2) at Asn-198, Man(9-14)GlcNAc(2) at Asn-279 and phosphorylated Man(12-17)GlcNAc(2) as well as Man(11-16)GlcNAc(2) at Asn-479.

It localises to the vacuole lumen. The enzyme catalyses Release of a C-terminal amino acid with broad specificity.. Its activity is regulated as follows. Inhibited by ZPCK. In terms of biological role, vacuolar serine-type carboxypeptidase involved in degradation of small peptides. Digests preferentially peptides containing an aliphatic or hydrophobic residue in P1' position, as well as methionine, leucine or phenylalanine in P1 position of ester substrate. Also plays a role in breakdown of the autophagic body and the autophagosome-dependent protein synthesis. Plays a key role in phytochelatin (PC) synthesis from glutathione (GSH) by cleaving the Gly from GSH and form the PC-peptides of the structure (gamma-Glu-Cys)2-Gly. Also involved in resistance to xenobiotics via the degradation of glutathione-S-conjugates. This is Carboxypeptidase Y from Saccharomyces cerevisiae (strain ATCC 204508 / S288c) (Baker's yeast).